We begin with the raw amino-acid sequence, 147 residues long: D-aminoacyl-tRNA deacylase (147 aa).

Positions 139–140 (GP) match the Gly-cisPro motif, important for rejection of L-amino acids motif.

This sequence belongs to the DTD family. In terms of assembly, homodimer.

The protein resides in the cytoplasm. It catalyses the reaction glycyl-tRNA(Ala) + H2O = tRNA(Ala) + glycine + H(+). The enzyme catalyses a D-aminoacyl-tRNA + H2O = a tRNA + a D-alpha-amino acid + H(+). An aminoacyl-tRNA editing enzyme that deacylates mischarged D-aminoacyl-tRNAs. Also deacylates mischarged glycyl-tRNA(Ala), protecting cells against glycine mischarging by AlaRS. Acts via tRNA-based rather than protein-based catalysis; rejects L-amino acids rather than detecting D-amino acids in the active site. By recycling D-aminoacyl-tRNA to D-amino acids and free tRNA molecules, this enzyme counteracts the toxicity associated with the formation of D-aminoacyl-tRNA entities in vivo and helps enforce protein L-homochirality. This is D-aminoacyl-tRNA deacylase from Rippkaea orientalis (strain PCC 8801 / RF-1) (Cyanothece sp. (strain PCC 8801)).